The chain runs to 145 residues: Small ribosomal subunit protein uS12 (145 aa).

Hydroxyproline is present on P64.

Belongs to the universal ribosomal protein uS12 family.

In Aspergillus fumigatus (strain ATCC MYA-4609 / CBS 101355 / FGSC A1100 / Af293) (Neosartorya fumigata), this protein is Small ribosomal subunit protein uS12 (rps23).